The primary structure comprises 375 residues: tRNA-specific 2-thiouridylase MnmA (375 aa).

Residues 20 to 27 and Leu46 contribute to the ATP site; that span reads AMSGGVDS. Catalysis depends on Cys114, which acts as the Nucleophile. Cys114 and Cys211 are joined by a disulfide. Gly138 is a binding site for ATP. The segment at 160–162 is interaction with tRNA; the sequence is RDQ. Cys211 functions as the Cysteine persulfide intermediate in the catalytic mechanism.

This sequence belongs to the MnmA/TRMU family.

Its subcellular location is the cytoplasm. It carries out the reaction S-sulfanyl-L-cysteinyl-[protein] + uridine(34) in tRNA + AH2 + ATP = 2-thiouridine(34) in tRNA + L-cysteinyl-[protein] + A + AMP + diphosphate + H(+). Functionally, catalyzes the 2-thiolation of uridine at the wobble position (U34) of tRNA, leading to the formation of s(2)U34. In Ruegeria pomeroyi (strain ATCC 700808 / DSM 15171 / DSS-3) (Silicibacter pomeroyi), this protein is tRNA-specific 2-thiouridylase MnmA.